A 215-amino-acid polypeptide reads, in one-letter code: Pyrrolidone-carboxylate peptidase (215 aa).

Residues Glu-80, Cys-143, and His-167 contribute to the active site.

This sequence belongs to the peptidase C15 family. Homotetramer.

It localises to the cytoplasm. The enzyme catalyses Release of an N-terminal pyroglutamyl group from a polypeptide, the second amino acid generally not being Pro.. Removes 5-oxoproline from various penultimate amino acid residues except L-proline. This is Pyrrolidone-carboxylate peptidase from Bacillus cereus (strain ATCC 10987 / NRS 248).